The primary structure comprises 149 residues: UPF0310 protein msl3206 (149 aa).

Belongs to the UPF0310 family.

This chain is UPF0310 protein msl3206, found in Mesorhizobium japonicum (strain LMG 29417 / CECT 9101 / MAFF 303099) (Mesorhizobium loti (strain MAFF 303099)).